Consider the following 617-residue polypeptide: Dihydroxy-acid dehydratase (617 aa).

D81 is a Mg(2+) binding site. A [2Fe-2S] cluster-binding site is contributed by C122. Mg(2+) is bound by residues D123 and K124. Residue K124 is modified to N6-carboxylysine. C195 contacts [2Fe-2S] cluster. Position 491 (E491) interacts with Mg(2+). S517 acts as the Proton acceptor in catalysis.

This sequence belongs to the IlvD/Edd family. In terms of assembly, homodimer. It depends on [2Fe-2S] cluster as a cofactor. Mg(2+) serves as cofactor.

It catalyses the reaction (2R)-2,3-dihydroxy-3-methylbutanoate = 3-methyl-2-oxobutanoate + H2O. The enzyme catalyses (2R,3R)-2,3-dihydroxy-3-methylpentanoate = (S)-3-methyl-2-oxopentanoate + H2O. Its pathway is amino-acid biosynthesis; L-isoleucine biosynthesis; L-isoleucine from 2-oxobutanoate: step 3/4. The protein operates within amino-acid biosynthesis; L-valine biosynthesis; L-valine from pyruvate: step 3/4. Its function is as follows. Functions in the biosynthesis of branched-chain amino acids. Catalyzes the dehydration of (2R,3R)-2,3-dihydroxy-3-methylpentanoate (2,3-dihydroxy-3-methylvalerate) into 2-oxo-3-methylpentanoate (2-oxo-3-methylvalerate) and of (2R)-2,3-dihydroxy-3-methylbutanoate (2,3-dihydroxyisovalerate) into 2-oxo-3-methylbutanoate (2-oxoisovalerate), the penultimate precursor to L-isoleucine and L-valine, respectively. The protein is Dihydroxy-acid dehydratase of Hydrogenovibrio crunogenus (strain DSM 25203 / XCL-2) (Thiomicrospira crunogena).